The primary structure comprises 3948 residues: Hybrid PKS-NRPS synthetase ucsA (3948 aa).

Residues 11–440 (NEPIAVIGSG…GTNAHAILER (430 aa)) form the Ketosynthase family 3 (KS3) domain. Active-site for beta-ketoacyl synthase activity residues include cysteine 184, histidine 323, and histidine 363. Positions 548–881 (IFTGQGAQWP…FSTAIGQLWA (334 aa)) are malonyl-CoA:ACP transacylase (MAT) domain. An N-terminal hotdog fold region spans residues 940–1079 (HPLLGTLGAD…GHIRLTITDF (140 aa)). Positions 940–1254 (HPLLGTLGAD…IRLIPFAAAS (315 aa)) are dehydratase (DH) domain. Residues 940-1256 (HPLLGTLGAD…LIPFAAASEA (317 aa)) form the PKS/mFAS DH domain. Residue histidine 972 is the Proton acceptor; for dehydratase activity of the active site. Residues 1098-1256 (MTEVDQNLFY…LIPFAAASEA (159 aa)) are C-terminal hotdog fold. The Proton donor; for dehydratase activity role is filled by aspartate 1161. Residues 1299–1460 (LAHVVGQITH…LRAGFTGVET (162 aa)) are methyltransferase (MT) domain. Residues 1989–2165 (TYILFGLAGA…ASVIDIGPIS (177 aa)) are ketoreductase (KR) domain. In terms of domain architecture, Carrier 1 spans 2275–2357 (DVARVLRHAI…GLVDFAVDNL (83 aa)). Serine 2317 carries the O-(pantetheine 4'-phosphoryl)serine modification. Residues 2381-2404 (PKAKTDAPAAAPTPASATAPGSKS) are compositionally biased toward low complexity. A disordered region spans residues 2381 to 2473 (PKAKTDAPAA…SSQAASLESS (93 aa)). 2 stretches are compositionally biased toward polar residues: residues 2405-2418 (DGNVSSIARSADQS) and 2426-2437 (PQPTAILTNATA). Over residues 2441 to 2456 (PVSPSLSVTGSTSSAA) the composition is skewed to low complexity. Residues 2462–2473 (PTSSQAASLESS) show a composition bias toward polar residues. A condensation (C) domain region spans residues 2489–2926 (EKTLPMSYGQ…PQIFNSSKVQ (438 aa)). An adenylation (A) (KR) domain region spans residues 2950–3355 (DIAAVQPTLT…GEFVLQARIK (406 aa)). Positions 3483–3507 (PLTNKGGLKETPVARPTRYQNDPIP) are disordered. One can recognise a Carrier 2 domain in the interval 3513 to 3592 (SSPFSSLDQV…QMASLLDGKD (80 aa)). Serine 3552 is subject to O-(pantetheine 4'-phosphoryl)serine. Positions 3633 to 3852 (LTGATGFLGL…QFVPVEDVAN (220 aa)) are reductase (R) domain.

The protein in the C-terminal section; belongs to the NRP synthetase family.

Its pathway is mycotoxin biosynthesis. In terms of biological role, hybrid PKS-NRPS synthetase; part of the gene cluster that mediates the biosynthesis of UCS1025A, a member of the pyrrolizidinone family that acts as a strong telomerase inhibitor and displays potent antibacterial and antitumor properties. These compounds share a hemiaminal-containing pyrrolizidinone core fused with a gamma-lactone, giving a furopyrrolizidine that is connected to a decalin fragment. The polyketide synthase module (PKS) of the PKS-NRPS ucsA is responsible for the synthesis of the polyketide backbone via the condensation of an acetyl-CoA starter unit with 6 malonyl-CoA units. The downstream nonribosomal peptide synthetase (NRPS) module then amidates the carboxyl end of the polyketide with a 2S,3S-methylproline derived from L-isoleucine by the 2-oxoglutarate-dependent dioxygenase ucsF which converts L-isoleucine to (4S,5S)-4-methylpyrroline-5-carboxylate that is further converted to 2S,3S-methylproline by the pyrroline-5-carboxylate reductase ucsG. Reductive release of the completed aminoacyl polyketide from the assembly line can form the 3-pyrrolin-2-one structure via an intramolecular Knoevenagel reaction. Because ucsA lacks a designated enoylreductase (ER) domain, the required activity is provided the enoyl reductase ucsL. This keto acyclic precursor is the substrate of the Diels-Alderase ucsH, that catalyzes the Diels-Alder cycloaddition. Oxidation of the 3S-methyl group to a carboxylate by the cytochrome P450 monooxygenase ucsK allows an oxa-Michael cyclization that might involve the reductase/dehydrogenase ucsI and which furnishes the furopyrrolizidine. The oxidase ucsJ likely plays a critical role in stereoselective reduction of the C5-C6 double bond to afford the required R-configured carboxylate group. Further enolization and oxidation at C5 by an unidentified enzyme affords the last intermediate that can undergo oxa-Michael cyclization to yield UCS1025A. The polypeptide is Hybrid PKS-NRPS synthetase ucsA (Acremonium sp).